A 156-amino-acid polypeptide reads, in one-letter code: ATP synthase subunit b (156 aa).

Residues 7-27 form a helical membrane-spanning segment; the sequence is LFVQAIVFLILVLFTMKFVWP.

This sequence belongs to the ATPase B chain family. F-type ATPases have 2 components, F(1) - the catalytic core - and F(0) - the membrane proton channel. F(1) has five subunits: alpha(3), beta(3), gamma(1), delta(1), epsilon(1). F(0) has three main subunits: a(1), b(2) and c(10-14). The alpha and beta chains form an alternating ring which encloses part of the gamma chain. F(1) is attached to F(0) by a central stalk formed by the gamma and epsilon chains, while a peripheral stalk is formed by the delta and b chains.

The protein resides in the cell inner membrane. Functionally, f(1)F(0) ATP synthase produces ATP from ADP in the presence of a proton or sodium gradient. F-type ATPases consist of two structural domains, F(1) containing the extramembraneous catalytic core and F(0) containing the membrane proton channel, linked together by a central stalk and a peripheral stalk. During catalysis, ATP synthesis in the catalytic domain of F(1) is coupled via a rotary mechanism of the central stalk subunits to proton translocation. In terms of biological role, component of the F(0) channel, it forms part of the peripheral stalk, linking F(1) to F(0). This is ATP synthase subunit b from Paracidovorax citrulli (strain AAC00-1) (Acidovorax citrulli).